A 279-amino-acid polypeptide reads, in one-letter code: Dehydrogenase/reductase SDR family member 4 (279 aa).

37 to 61 (LVTASTDGIGLAIARRLAQDGAHVV) contributes to the NADP(+) binding site. Lysine 93 carries the post-translational modification N6-acetyllysine; alternate. An N6-succinyllysine; alternate modification is found at lysine 93. Serine 170 contributes to the substrate binding site. The active-site Proton acceptor is the tyrosine 183. Lysine 187 contacts NADP(+). N6-acetyllysine; alternate is present on lysine 217. Lysine 217 carries the N6-succinyllysine; alternate modification. Serine 221 is modified (phosphoserine). Residues lysine 228 and lysine 235 each carry the N6-succinyllysine modification. The Peroxisomal targeting signal motif lies at 277-279 (SRL).

Belongs to the short-chain dehydrogenases/reductases (SDR) family. As to quaternary structure, homotetramer. As to expression, detected in heart, kidney, liver and small intestine. Detected at lower levels in brain, lung, stomach and spleen.

Its subcellular location is the peroxisome. It carries out the reaction a secondary alcohol + NADP(+) = a ketone + NADPH + H(+). The catalysed reaction is 3alpha-hydroxy-5beta-pregnan-20-one + NADP(+) = 5beta-pregnan-3,20-dione + NADPH + H(+). It catalyses the reaction 5beta-dihydrotestosterone + NADPH + H(+) = 5beta-androstane-3alpha,17beta-diol + NADP(+). The enzyme catalyses all-trans-retinol + NADP(+) = all-trans-retinal + NADPH + H(+). It carries out the reaction isatin + NADPH + H(+) = 3-hydroxyindolin-2-one + NADP(+). Its activity is regulated as follows. Inhibited by kaempferol, quercetin, genistein and myristic acid. Its function is as follows. NADPH-dependent oxidoreductase which catalyzes the reduction of a variety of compounds bearing carbonyl groups including ketosteroids, alpha-dicarbonyl compounds, aldehydes, aromatic ketones and quinones. Reduces all-trans-retinal and 9-cis retinal. Reduces 3-ketosteroids and benzil into 3alpha-hydroxysteroids and S-benzoin, respectively, in contrast to the stereoselectivity of primates DHRS4s which produce 3beta-hydroxysteroids and R-benzoin. In the reverse reaction, catalyzes the NADP-dependent oxidation of 3alpha-hydroxysteroids and alcohol, but with much lower efficiency. Involved in the metabolism of 3alpha-hydroxysteroids, retinoid, isatin and xenobiotic carbonyl compounds. This Sus scrofa (Pig) protein is Dehydrogenase/reductase SDR family member 4 (DHRS4).